Consider the following 434-residue polypeptide: uncharacterized protein (434 aa).

Position 216 is an N6-(pyridoxal phosphate)lysine (K216).

This is an uncharacterized protein from Schizosaccharomyces pombe (strain 972 / ATCC 24843) (Fission yeast).